Here is a 601-residue protein sequence, read N- to C-terminus: MICPRKKRPIKDEDFSAIVVPSMRGHGYLDYTVESHPSKALQNMDELRHHEMLCDLVLHVTYKDKIVDFKVHKLVLAASSPYFKAMFTSNFKECHASEVTLRDVCPQVISRLIDFAYTSRITVGETCVLHVLLTAMRYQMEEVAKACCDFLMKNLEPSNVIGISRFAEEIGCTDLHLRTREYINTHFNEVTKEEEFFSLSHCQLLELISQDSLKVLCESEVYKACIDWVRWDAESRAQYFHALLNAVHIYALPPTFLKRQLQSCPILSKANSCKDFLSKIFHEMALRKPLPPTPHRGTQLIYIAGGYKQHSLDTLEAFDPHKNVWLKLGSMMSPCSGLGACVLFGLLYTVGGRNLSLQNNTESGSLSCYNPMTNQWTQLAPLNTPRNRVGVGVIDGSIYAVGGSHASTHHNSVERYDPETNRWTFVAPMSVARLGAGVAACGGCLYVVGGFDGDNRWNTVERYQPDTNTWQHVAPMNTVRSGLGVVCMDNYLYAVGGYDGQTQLKTMERYNITRDVWEPMASMNHCRSAHGVSVYQCKIFVLGGFNQGGFLSSVECYCPASNVWTLVTDMPVGRSGMGVAVTMEPCPGILPEEEEEVDEEM.

Positions Met44 to Tyr117 constitute a BTB domain. Positions Lys153–Pro253 constitute a BACK domain. Kelch repeat units follow at residues Pro292 to Gly337, Leu338 to Arg388, Val389 to Gly435, Ala436 to Gly482, Gly484 to Ala529, and His530 to Gly576.

This sequence belongs to the KEAP1 family. Homodimer and heterodimer; heterodimerizes with keap1b. Component of the BCR(KEAP1) E3 ubiquitin ligase complex, at least composed of 2 molecules of cul3, 2 molecules of keap1 (keap1a and/or keap1b), and rbx1. Interacts with nfe2l2/nrf2; the interaction is direct. In terms of processing, non-enzymatic covalent modifications of reactive cysteines by electrophile metabolites inactivate the BCR(KEAP1) complex. As to expression, widely expressed.

Its subcellular location is the cytoplasm. It is found in the nucleus. The protein operates within protein modification; protein ubiquitination. Ubiquitin ligase activity of the BCR(KEAP1) complex is inhibited by oxidative stress and electrophile metabolites such as sulforaphane. Electrophile metabolites react with reactive cysteine residues in keap1 and trigger non-enzymatic covalent modifications of these cysteine residues, leading to inactivate the ubiquitin ligase activity of the BCR(KEAP1) complex. In terms of biological role, substrate-specific adapter of a BCR (BTB-CUL3-RBX1) E3 ubiquitin ligase complex that regulates the response to oxidative stress by targeting nfe2l2/nrf2 for ubiquitination. Keap1 acts as a key sensor of oxidative and electrophilic stress: in normal conditions, the BCR(KEAP1) complex mediates ubiquitination and degradation of nfe2l2/nrf2, a transcription factor regulating expression of many cytoprotective genes. In response to oxidative stress, different electrophile metabolites trigger non-enzymatic covalent modifications of highly reactive cysteine residues in KEAP1, leading to inactivate the ubiquitin ligase activity of the BCR(KEAP1) complex, promoting nfe2l2/nrf2 nuclear accumulation and expression of phase II detoxifying enzymes. In Danio rerio (Zebrafish), this protein is Kelch-like ECH-associated protein 1A.